A 250-amino-acid chain; its full sequence is UPF0736 protein YjbA (250 aa).

The protein belongs to the UPF0736 family.

The chain is UPF0736 protein YjbA (yjbA) from Bacillus subtilis (strain 168).